A 170-amino-acid chain; its full sequence is Acetyl-CoA decarbonylase/synthase complex subunit epsilon 2 (170 aa).

This sequence belongs to the CdhB family. As to quaternary structure, heterotetramer of two alpha and two epsilon subunits. The ACDS complex is made up of alpha, epsilon, beta, gamma and delta subunits with a probable stoichiometry of (alpha(2)epsilon(2))(4)-beta(8)-(gamma(1)delta(1))(8).

Its pathway is one-carbon metabolism; methanogenesis from acetate. Its function is as follows. Part of a complex that catalyzes the reversible cleavage of acetyl-CoA, allowing growth on acetate as sole source of carbon and energy. The alpha-epsilon subcomponent functions as a carbon monoxide dehydrogenase. The precise role of the epsilon subunit is unclear; it may have a stabilizing role within the alpha(2)epsilon(2) component and/or be involved in electron transfer to FAD during a potential FAD-mediated CO oxidation. This Methanosarcina thermophila protein is Acetyl-CoA decarbonylase/synthase complex subunit epsilon 2 (cdhB2).